We begin with the raw amino-acid sequence, 43 residues long: Protein PsbN (43 aa).

Residues 7–27 form a helical membrane-spanning segment; it reads ITIFLSCFLVGVTGYALYTAF.

This sequence belongs to the PsbN family.

The protein resides in the plastid. It is found in the chloroplast thylakoid membrane. Functionally, may play a role in photosystem I and II biogenesis. This is Protein PsbN from Klebsormidium bilatum (Filamentous green alga).